We begin with the raw amino-acid sequence, 676 residues long: RNA helicase NPH-II (676 aa).

Positions 172 to 347 (FSAWISHRPV…VFLPNPAFIH (176 aa)) constitute a Helicase ATP-binding domain. 185–192 (GGTGVGKT) contributes to the ATP binding site. The short motif at 296–299 (DEVH) is the DEXH box element. A Helicase C-terminal domain is found at 366–542 (NPSSRMAYIE…KFNLTLPEDL (177 aa)).

It belongs to the DEAD box helicase family. DEAH subfamily. Monomer.

It localises to the virion. It catalyses the reaction ATP + H2O = ADP + phosphate + H(+). NTP-dependent helicase that catalyzes unidirectional unwinding of 3'tailed duplex RNAs and plays an important role during transcription of early mRNAs, presumably by preventing R-loop formation behind the elongating RNA polymerase. Might also play a role in the export of newly synthesized mRNA chains out of the core into the cytoplasm. Required for replication and propagation of viral particles. The chain is RNA helicase NPH-II (OPG084) from Homo sapiens (Human).